Consider the following 159-residue polypeptide: Ribosomal RNA large subunit methyltransferase H (159 aa).

Residues Leu76 and Gly108 each coordinate S-adenosyl-L-methionine.

It belongs to the RNA methyltransferase RlmH family. In terms of assembly, homodimer.

Its subcellular location is the cytoplasm. The catalysed reaction is pseudouridine(1915) in 23S rRNA + S-adenosyl-L-methionine = N(3)-methylpseudouridine(1915) in 23S rRNA + S-adenosyl-L-homocysteine + H(+). In terms of biological role, specifically methylates the pseudouridine at position 1915 (m3Psi1915) in 23S rRNA. This Ligilactobacillus salivarius (strain UCC118) (Lactobacillus salivarius) protein is Ribosomal RNA large subunit methyltransferase H.